The following is a 186-amino-acid chain: Dihydrofolate reductase (186 aa).

The region spanning 2–180 (RLNVVVAVSE…FTFKFCVYDV (179 aa)) is the DHFR domain. NADP(+) is bound by residues A8 and 14–20 (GIGKGGG). Residue 28–33 (DMEFFK) participates in substrate binding. 51–53 (RVT) provides a ligand contact to NADP(+). R67 is a substrate binding site. NADP(+) contacts are provided by residues 73–75 (SST) and 112–119 (GGYRLYKE).

This sequence belongs to the dihydrofolate reductase family. As to quaternary structure, monomer.

It carries out the reaction (6S)-5,6,7,8-tetrahydrofolate + NADP(+) = 7,8-dihydrofolate + NADPH + H(+). It functions in the pathway cofactor biosynthesis; tetrahydrofolate biosynthesis; 5,6,7,8-tetrahydrofolate from 7,8-dihydrofolate: step 1/1. Its function is as follows. Key enzyme in folate metabolism. Contributes to the de novo mitochondrial thymidylate biosynthesis pathway. Catalyzes an essential reaction for de novo glycine and purine synthesis, and for DNA precursor synthesis. This is Dihydrofolate reductase from Schistosoma mansoni (Blood fluke).